The chain runs to 1121 residues: Brassinosteroid LRR receptor kinase BRI1 (1121 aa).

An N-terminal signal peptide occupies residues 1 to 24; the sequence is MDSLWAAIAALFVAAAVVVRGAAA. The short motif at 54 to 61 is the Cys pair 1 element; that stretch reads CRFPGAGC. 17 LRR repeats span residues 90 to 114, 116 to 142, 144 to 167, 170 to 193, 197 to 221, 223 to 243, 244 to 268, 269 to 292, 294 to 317, 318 to 341, 343 to 367, 369 to 391, 392 to 415, 416 to 439, 441 to 463, 464 to 487, and 489 to 511; these read LGSVEVLSLRGANVSGALSAAGGAR, GSKLQALDLSGNAALRGSVADVAALAS, CGGLKTLNLSGDAVGAAKVGGGGG, FAGLDSLDLSNNKITDDSDLRWMV, VGAVRWLDLALNRISGVPEFTNCSG, QYLDLSGNLIVGEVPGGALSD, CRGLKVLNLSFNHLAGVFPPDIAGL, TSLNALNLSNNNFSGELPGEAFAK, QQLTALSLSFNHFNGSIPDTVASL, PELQQLDLSSNTFSGTIPSSLCQD, NSKLHLLYLQNNYLTGGIPDAVSNC, SLVSLDLSLNYINGSIPASLGDL, GNLQDLILWQNELEGEIPASLSRI, QGLEHLILDYNGLTGSIPPELAKC, KLNWISLASNRLSGPIPSWLGKL, SYLAILKLSNNSFSGPIPPELGDC, and SLVWLDLNSNQLNGSIPKELAKQ. An N-linked (GlcNAc...) asparagine glycan is attached at Asn-102. Asn-151 is a glycosylation site (N-linked (GlcNAc...) asparagine). The N-linked (GlcNAc...) asparagine glycan is linked to Asn-218. 4 N-linked (GlcNAc...) asparagine glycosylation sites follow: Asn-251, Asn-275, Asn-280, and Asn-307. Asn-366 and Asn-381 each carry an N-linked (GlcNAc...) asparagine glycan. 2 N-linked (GlcNAc...) asparagine glycosylation sites follow: Asn-473 and Asn-501. Residue Tyr-525 coordinates brassinolide. The stretch at 541–564 is one LRR 18 repeat; it reads GSLLEFTSIRPDDLSRMPSKKLCN. An N-linked (GlcNAc...) asparagine glycan is attached at Asn-564. Tyr-569 serves as a coordination point for brassinolide. The N-linked (GlcNAc...) asparagine glycan is linked to Asn-580. 4 LRR repeats span residues 580–603, 604–628, 629–651, and 652–676; these read NGSMIFLDLSYNQLDSAIPGELGD, MFYLMIMNLGHNLLSGTIPSRLAEA, KKLAVLDLSYNQLEGPIPNSFSA, and LSLSEINLSNNQLNGTIPELGSLAT. N-linked (GlcNAc...) asparagine glycans are attached at residues Asn-658, Asn-665, and Asn-684. A Cys pair 2 motif is present at residues 689-696; sequence CGFPLPPC. The interval 693-712 is disordered; sequence LPPCDHSSPRSSNDHQSHRR. A helical transmembrane segment spans residues 719–739; sequence SIAMGLLFSLFCIIVIIIAIG. The region spanning 807–1083 is the Protein kinase domain; the sequence is FHIACQIGSG…LKVMAMFKEI (277 aa). ATP contacts are provided by residues 813 to 821, Lys-835, 881 to 883, 887 to 890, 933 to 938, and Asp-951; these read IGSGGFGDV, DYM, SLED, and DMKSSN. Catalysis depends on Asp-933, which acts as the Proton acceptor.

Belongs to the protein kinase superfamily. Ser/Thr protein kinase family. In terms of assembly, interacts with BIP103 and BIP131. Interacts with BAK1. Interacts with BSK3. Interacts with SERK2. Highly expressed in shoots. Expressed at low levels in roots.

Its subcellular location is the cell membrane. It carries out the reaction L-seryl-[protein] + ATP = O-phospho-L-seryl-[protein] + ADP + H(+). It catalyses the reaction L-threonyl-[protein] + ATP = O-phospho-L-threonyl-[protein] + ADP + H(+). In terms of biological role, receptor kinase involved brassinosteroid (BR) signal transduction. Regulates, in response to BR binding, a signaling cascade involved in plant development, promotion of cell elongation and flowering. Activates BR signaling by targeting and phosphorylating BSK3, a positive regulator of BR signaling. Forms at the plasma membrane a receptor complex with BAK1 which is activated in response to brassinolide. Phosphorylates BAK1. Phosphorylates REM4.1, which reduces REM4.1 binding affinity to BAK1 and allows the formation and subsequent activation of the BRI1-BAK1 receptor complex. Functions in various growth and developmental processes, such as internode elongation, bending of the lamina joint and skotomorphogenesis. Functions in internode elongation by inducing the formation of the intercalary meristem and the longitudinal elongation of internode cells. Involved in organ development through the control of cell division and elongation. Does not seem essential for organ pattern formation or organ initiation. This Oryza sativa subsp. japonica (Rice) protein is Brassinosteroid LRR receptor kinase BRI1.